The sequence spans 403 residues: Cell cycle checkpoint control protein RAD9B (403 aa).

A disordered region spans residues 285–347 (PLSQARRSHP…ASAGQDDIFE (63 aa)). Residues Ser354 and Ser363 each carry the phosphoserine modification.

The protein belongs to the rad9 family. As to quaternary structure, interacts with HUS1, HUS1B, RAD1, RAD9A and RAD17.

This chain is Cell cycle checkpoint control protein RAD9B (Rad9b), found in Mus musculus (Mouse).